Reading from the N-terminus, the 207-residue chain is ATP-dependent Clp protease proteolytic subunit (207 aa).

The active-site Nucleophile is the Ser-111. His-136 is a catalytic residue.

This sequence belongs to the peptidase S14 family. In terms of assembly, fourteen ClpP subunits assemble into 2 heptameric rings which stack back to back to give a disk-like structure with a central cavity, resembling the structure of eukaryotic proteasomes.

Its subcellular location is the cytoplasm. The catalysed reaction is Hydrolysis of proteins to small peptides in the presence of ATP and magnesium. alpha-casein is the usual test substrate. In the absence of ATP, only oligopeptides shorter than five residues are hydrolyzed (such as succinyl-Leu-Tyr-|-NHMec, and Leu-Tyr-Leu-|-Tyr-Trp, in which cleavage of the -Tyr-|-Leu- and -Tyr-|-Trp bonds also occurs).. Its function is as follows. Cleaves peptides in various proteins in a process that requires ATP hydrolysis. Has a chymotrypsin-like activity. Plays a major role in the degradation of misfolded proteins. This Aeromonas salmonicida (strain A449) protein is ATP-dependent Clp protease proteolytic subunit.